Here is a 316-residue protein sequence, read N- to C-terminus: 4-hydroxy-3-methylbut-2-enyl diphosphate reductase (316 aa).

Residue Cys12 participates in [4Fe-4S] cluster binding. His41 and His74 together coordinate (2E)-4-hydroxy-3-methylbut-2-enyl diphosphate. Dimethylallyl diphosphate contacts are provided by His41 and His74. Positions 41 and 74 each coordinate isopentenyl diphosphate. [4Fe-4S] cluster is bound at residue Cys96. His124 serves as a coordination point for (2E)-4-hydroxy-3-methylbut-2-enyl diphosphate. A dimethylallyl diphosphate-binding site is contributed by His124. His124 serves as a coordination point for isopentenyl diphosphate. Glu126 serves as the catalytic Proton donor. Thr167 is a (2E)-4-hydroxy-3-methylbut-2-enyl diphosphate binding site. A [4Fe-4S] cluster-binding site is contributed by Cys197. (2E)-4-hydroxy-3-methylbut-2-enyl diphosphate is bound by residues Ser225, Ser226, Asn227, and Ser269. Dimethylallyl diphosphate-binding residues include Ser225, Ser226, Asn227, and Ser269. Isopentenyl diphosphate-binding residues include Ser225, Ser226, Asn227, and Ser269.

This sequence belongs to the IspH family. In terms of assembly, homodimer. Requires [4Fe-4S] cluster as cofactor.

It carries out the reaction isopentenyl diphosphate + 2 oxidized [2Fe-2S]-[ferredoxin] + H2O = (2E)-4-hydroxy-3-methylbut-2-enyl diphosphate + 2 reduced [2Fe-2S]-[ferredoxin] + 2 H(+). The catalysed reaction is dimethylallyl diphosphate + 2 oxidized [2Fe-2S]-[ferredoxin] + H2O = (2E)-4-hydroxy-3-methylbut-2-enyl diphosphate + 2 reduced [2Fe-2S]-[ferredoxin] + 2 H(+). The protein operates within isoprenoid biosynthesis; dimethylallyl diphosphate biosynthesis; dimethylallyl diphosphate from (2E)-4-hydroxy-3-methylbutenyl diphosphate: step 1/1. It functions in the pathway isoprenoid biosynthesis; isopentenyl diphosphate biosynthesis via DXP pathway; isopentenyl diphosphate from 1-deoxy-D-xylulose 5-phosphate: step 6/6. In terms of biological role, catalyzes the conversion of 1-hydroxy-2-methyl-2-(E)-butenyl 4-diphosphate (HMBPP) into a mixture of isopentenyl diphosphate (IPP) and dimethylallyl diphosphate (DMAPP). Acts in the terminal step of the DOXP/MEP pathway for isoprenoid precursor biosynthesis. The protein is 4-hydroxy-3-methylbut-2-enyl diphosphate reductase of Salmonella schwarzengrund (strain CVM19633).